Here is a 502-residue protein sequence, read N- to C-terminus: 4,4'-diapophytoene desaturase (4,4'-diaponeurosporene-forming) (502 aa).

An FAD-binding site is contributed by 5–17 (VIGAGVTGLAAAA).

Belongs to the carotenoid/retinoid oxidoreductase family. CrtN subfamily.

It catalyses the reaction 15-cis-4,4'-diapophytoene + 3 FAD + 3 H(+) = all-trans-4,4'-diaponeurosporene + 3 FADH2. The protein operates within carotenoid biosynthesis; staphyloxanthin biosynthesis; staphyloxanthin from farnesyl diphosphate: step 2/5. Its function is as follows. Involved in the biosynthesis of the yellow-orange carotenoid staphyloxanthin, which plays a role in the virulence via its protective function against oxidative stress. Catalyzes three successive dehydrogenation reactions that lead to the introduction of three double bonds into 4,4'-diapophytoene (dehydrosqualene), with 4,4'-diapophytofluene and 4,4'-diapo-zeta-carotene as intermediates, and 4,4'-diaponeurosporene (the major deep-yellow pigment in staphylococci strains) as the end product. The chain is 4,4'-diapophytoene desaturase (4,4'-diaponeurosporene-forming) from Staphylococcus aureus (strain MRSA252).